We begin with the raw amino-acid sequence, 72 residues long: UPF0495 protein KLLA0D04334g (72 aa).

A helical transmembrane segment spans residues 20 to 42; the sequence is PVELTPLFLAMGVALASGTWFSY.

Belongs to the UPF0495 family.

It is found in the membrane. The sequence is that of UPF0495 protein KLLA0D04334g from Kluyveromyces lactis (strain ATCC 8585 / CBS 2359 / DSM 70799 / NBRC 1267 / NRRL Y-1140 / WM37) (Yeast).